The sequence spans 93 residues: Small ribosomal subunit protein uS19 (93 aa).

Belongs to the universal ribosomal protein uS19 family.

In terms of biological role, protein S19 forms a complex with S13 that binds strongly to the 16S ribosomal RNA. The chain is Small ribosomal subunit protein uS19 from Symbiobacterium thermophilum (strain DSM 24528 / JCM 14929 / IAM 14863 / T).